A 368-amino-acid chain; its full sequence is Putative transport protein bbp_117 (368 aa).

The next 8 helical transmembrane spans lie at 13 to 35 (VIFSLVFIFIMIISSLWIMRPFF), 39 to 61 (AWASMVVVATWPIFLKLQILLWG), 68 to 90 (VMMTFSLLLVFIIPIVCLVNSLI), 159 to 181 (HFGRFILHLIFMLIFSALLYWNG), 216 to 238 (LGVVVTALVQGILSGIGLAISGI), 248 to 270 (IIIFCLVQLGPLPVLIPAIIWLY), 277 to 299 (WGTVLLIWSCVVCILDHILRPIL), and 314 to 336 (GVIGGLIAFGMIGLFIGPVVLII).

It belongs to the autoinducer-2 exporter (AI-2E) (TC 2.A.86) family.

It is found in the cell membrane. This Buchnera aphidicola subsp. Baizongia pistaciae (strain Bp) protein is Putative transport protein bbp_117.